A 489-amino-acid chain; its full sequence is Rhamnulokinase (489 aa).

13–17 serves as a coordination point for ATP; the sequence is ASSGR. The cysteines at positions 68 and 222 are disulfide-linked. Residues Gly-83 and 236–238 contribute to the substrate site; that span reads HDT. Residue Asp-237 is the Proton acceptor of the active site. Residue Thr-259 participates in ATP binding. Residue Asn-296 coordinates substrate. Gln-304 contributes to the ATP binding site. An intrachain disulfide couples Cys-353 to Cys-370. Residue Gly-402 participates in ATP binding. Cys-413 and Cys-417 are disulfide-bonded.

It belongs to the rhamnulokinase family. Monomer. Mg(2+) serves as cofactor.

It catalyses the reaction L-rhamnulose + ATP = L-rhamnulose 1-phosphate + ADP + H(+). It functions in the pathway carbohydrate degradation; L-rhamnose degradation; glycerone phosphate from L-rhamnose: step 2/3. In terms of biological role, involved in the catabolism of L-rhamnose (6-deoxy-L-mannose). Catalyzes the transfer of the gamma-phosphate group from ATP to the 1-hydroxyl group of L-rhamnulose to yield L-rhamnulose 1-phosphate. The chain is Rhamnulokinase from Escherichia coli O7:K1 (strain IAI39 / ExPEC).